A 163-amino-acid polypeptide reads, in one-letter code: MADSSFDVVSKVERQEVDNALHQAGKELSTRFDFRNTGASIEWSGEETITLTADTEERLLAALDVFKEKLIRRDISLKAFDAGEPAQSGKIYKLSGSLVQGITTENAKKITKKIRDEGPKGVKAQIQGDELRVSSKKRDDLQAVISLLKGEDFGIALQFVNYR.

It belongs to the YajQ family.

Functionally, nucleotide-binding protein. In Rhodococcus jostii (strain RHA1), this protein is Nucleotide-binding protein RHA1_ro01989.